A 123-amino-acid polypeptide reads, in one-letter code: Molluscan insulin-related peptide 1 (123 aa).

Positions 1 to 31 (MAGVRLVFTKAFMVTVLLTLLLNIGVKPAEG) are cleaved as a signal peptide. At Q32 the chain carries Pyrrolidone carboxylic acid. 3 disulfide bridges follow: C48-C109, C60-C122, and C108-C113. The propeptide occupies 68 to 69 (MV). At Q99 the chain carries Pyrrolidone carboxylic acid.

It belongs to the insulin family. Heterodimer of a B chain and an A chain linked by two disulfide bonds. In terms of tissue distribution, expressed in the cerebral light-green cells which are giant neuroendocrines cells involved in the control of growth.

The protein resides in the cytoplasmic vesicle. It is found in the secretory vesicle. In Lymnaea stagnalis (Great pond snail), this protein is Molluscan insulin-related peptide 1.